A 438-amino-acid polypeptide reads, in one-letter code: Putative hydroxypyruvate reductase (438 aa).

It catalyses the reaction (R)-glycerate + NAD(+) = 3-hydroxypyruvate + NADH + H(+). The enzyme catalyses (R)-glycerate + NADP(+) = 3-hydroxypyruvate + NADPH + H(+). It participates in carbohydrate acid metabolism; tartrate degradation; 3-hydroxypyruvate from D-glycerate: step 1/1. Its function is as follows. Degrades an unidentified toxic product from the first step of tartrate degradation. The chain is Putative hydroxypyruvate reductase (ttuD) from Agrobacterium vitis (Rhizobium vitis).